The primary structure comprises 347 residues: ATP-dependent kinase YFH7 (347 aa).

33-41 (GPPGSGKST) serves as a coordination point for ATP.

This sequence belongs to the YFH7 family.

Its function is as follows. ATP-dependent kinase that could be involved in endoplasmic reticulum membrane assembly. This chain is ATP-dependent kinase YFH7 (YFH7), found in Lachancea thermotolerans (strain ATCC 56472 / CBS 6340 / NRRL Y-8284) (Yeast).